Consider the following 53-residue polypeptide: ATP synthase protein 8 (53 aa).

A helical membrane pass occupies residues 10–30 (IMVFLVSMALLWAIMTMVFFL).

Belongs to the ATPase protein 8 family. F-type ATPases have 2 components, CF(1) - the catalytic core - and CF(0) - the membrane proton channel.

It localises to the mitochondrion membrane. In terms of biological role, mitochondrial membrane ATP synthase (F(1)F(0) ATP synthase or Complex V) produces ATP from ADP in the presence of a proton gradient across the membrane which is generated by electron transport complexes of the respiratory chain. F-type ATPases consist of two structural domains, F(1) - containing the extramembraneous catalytic core and F(0) - containing the membrane proton channel, linked together by a central stalk and a peripheral stalk. During catalysis, ATP synthesis in the catalytic domain of F(1) is coupled via a rotary mechanism of the central stalk subunits to proton translocation. Part of the complex F(0) domain. Minor subunit located with subunit a in the membrane. The protein is ATP synthase protein 8 (MT-ATP8) of Artemia franciscana (Brine shrimp).